Consider the following 266-residue polypeptide: Indole-3-glycerol phosphate synthase (266 aa).

It belongs to the TrpC family.

The catalysed reaction is 1-(2-carboxyphenylamino)-1-deoxy-D-ribulose 5-phosphate + H(+) = (1S,2R)-1-C-(indol-3-yl)glycerol 3-phosphate + CO2 + H2O. It functions in the pathway amino-acid biosynthesis; L-tryptophan biosynthesis; L-tryptophan from chorismate: step 4/5. This chain is Indole-3-glycerol phosphate synthase, found in Paracidovorax citrulli (strain AAC00-1) (Acidovorax citrulli).